The following is a 274-amino-acid chain: Acetyl-coenzyme A carboxylase carboxyl transferase subunit beta (274 aa).

Positions 16–274 (LWTKCEECKN…LLNLLFYKNA (259 aa)) constitute a CoA carboxyltransferase N-terminal domain. Residues Cys20, Cys23, Cys39, and Cys42 each contribute to the Zn(2+) site. The C4-type zinc finger occupies 20 to 42 (CEECKNILLAQELETNFYVCPKC).

Belongs to the AccD/PCCB family. Acetyl-CoA carboxylase is a heterohexamer composed of biotin carboxyl carrier protein (AccB), biotin carboxylase (AccC) and two subunits each of ACCase subunit alpha (AccA) and ACCase subunit beta (AccD). Zn(2+) serves as cofactor.

The protein localises to the cytoplasm. It carries out the reaction N(6)-carboxybiotinyl-L-lysyl-[protein] + acetyl-CoA = N(6)-biotinyl-L-lysyl-[protein] + malonyl-CoA. Its pathway is lipid metabolism; malonyl-CoA biosynthesis; malonyl-CoA from acetyl-CoA: step 1/1. Component of the acetyl coenzyme A carboxylase (ACC) complex. Biotin carboxylase (BC) catalyzes the carboxylation of biotin on its carrier protein (BCCP) and then the CO(2) group is transferred by the transcarboxylase to acetyl-CoA to form malonyl-CoA. The polypeptide is Acetyl-coenzyme A carboxylase carboxyl transferase subunit beta (Hydrogenobaculum sp. (strain Y04AAS1)).